Here is a 139-residue protein sequence, read N- to C-terminus: MKPAARRRARECAVQALYSWQISKNDIADVEYQFLSEQDVKDVDVNYFRELLSGVASNAEYLDGLMAPVLSRQLDELGQVERAILRVSIYELSKRQDVPYKVAINEGIELAKIFGAEDSHKFVNGVLDKVAPQVRPNRK.

It belongs to the NusB family.

Its function is as follows. Involved in transcription antitermination. Required for transcription of ribosomal RNA (rRNA) genes. Binds specifically to the boxA antiterminator sequence of the ribosomal RNA (rrn) operons. This chain is Transcription antitermination protein NusB, found in Edwardsiella ictaluri (strain 93-146).